A 469-amino-acid polypeptide reads, in one-letter code: 3-isopropylmalate dehydratase large subunit (469 aa).

Residues Cys350, Cys410, and Cys413 each contribute to the [4Fe-4S] cluster site.

The protein belongs to the aconitase/IPM isomerase family. LeuC type 1 subfamily. As to quaternary structure, heterodimer of LeuC and LeuD. [4Fe-4S] cluster is required as a cofactor.

It carries out the reaction (2R,3S)-3-isopropylmalate = (2S)-2-isopropylmalate. The protein operates within amino-acid biosynthesis; L-leucine biosynthesis; L-leucine from 3-methyl-2-oxobutanoate: step 2/4. In terms of biological role, catalyzes the isomerization between 2-isopropylmalate and 3-isopropylmalate, via the formation of 2-isopropylmaleate. The protein is 3-isopropylmalate dehydratase large subunit of Brucella melitensis biotype 2 (strain ATCC 23457).